Consider the following 1444-residue polypeptide: Rho GTPase-activating protein 31 (1444 aa).

Positions 21-216 constitute a Rho-GAP domain; that stretch reads CDLTEYLESS…FILNHVDQIF (196 aa). At S272 the chain carries Phosphoserine. T286 carries the phosphothreonine modification. Phosphoserine occurs at positions 346, 349, and 387. Positions 398–427 are disordered; that stretch reads WGQEGMPPGAEGGFDVSSDRSHLQGAQARP. The residue at position 476 (S476) is a Phosphoserine. A disordered region spans residues 504 to 631; sequence TNSTPCRTPP…ESSTLQESPR (128 aa). Positions 515-534 are enriched in low complexity; that stretch reads ELQSLSSLEEFSFHGSESGG. The span at 600 to 619 shows a compositional bias: basic and acidic residues; it reads NELEKRPNPEKVVEEGREAG. T679 carries the post-translational modification Phosphothreonine. Disordered stretches follow at residues 688–893 and 906–1108; these read SSLG…EDDT and EPWE…SSLN. 2 positions are modified to phosphoserine: S701 and S712. Positions 722-734 are enriched in polar residues; it reads PANQSTQGASTAA. A compositionally biased stretch (basic and acidic residues) spans 735–745; sequence SREKPEPEQGL. A compositionally biased stretch (pro residues) spans 777-790; that stretch reads LSPPLPPAPPPPTP. S778 carries the phosphoserine modification. T789 bears the Phosphothreonine mark. Residues 803-817 show a composition bias toward basic and acidic residues; sequence GPEREDSSRKLRTDL. Over residues 822–834 the composition is skewed to polar residues; the sequence is LKSQDSPEISSLC. Positions 839-848 are enriched in basic and acidic residues; sequence ATPRHSDKQN. The segment covering 960-977 has biased composition (polar residues); the sequence is TVKSQWTLEVPSSSSCAN. S974 is subject to Phosphoserine. Residues 992-1008 show a composition bias toward basic and acidic residues; the sequence is PRREITGWDEKALRSFR. Positions 1028-1038 are enriched in polar residues; it reads VQPNPAETSPI. The span at 1064 to 1075 shows a compositional bias: low complexity; sequence GPESSKESSPSV. Phosphoserine is present on residues S1105, S1106, and S1178. Polar residues-rich tracts occupy residues 1211–1224 and 1234–1245; these read QIPQ…SGEN and EGPSSTSGTTQK. The interval 1211–1346 is disordered; the sequence is QIPQPLPSQS…HRSRPGRPQS (136 aa). Over residues 1246–1265 the composition is skewed to basic and acidic residues; the sequence is PAKDDSPSSLESSKEEKPKQ. Polar residues-rich tracts occupy residues 1292–1303 and 1314–1323; these read PGSSNLLSTQDA and TEPSGDNLLS.

Interacts with ITSN1, which inhibits GAP activity. Interacts with PARVA. Interacts with GTP-loaded RHOU. In terms of processing, phosphorylation on Thr-789 reduces GAP activity.

It localises to the cell projection. It is found in the lamellipodium. The protein resides in the cell junction. The protein localises to the focal adhesion. Functions as a GTPase-activating protein (GAP) for RAC1 and CDC42. Required for cell spreading, polarized lamellipodia formation and cell migration. This is Rho GTPase-activating protein 31 (ARHGAP31) from Homo sapiens (Human).